Consider the following 393-residue polypeptide: CCA-adding enzyme (393 aa).

ATP contacts are provided by glycine 27 and arginine 30. CTP contacts are provided by glycine 27 and arginine 30. Positions 40 and 42 each coordinate Mg(2+). The ATP site is built by arginine 111, aspartate 154, arginine 157, arginine 160, and arginine 163. Residues arginine 111, aspartate 154, arginine 157, arginine 160, and arginine 163 each contribute to the CTP site.

This sequence belongs to the tRNA nucleotidyltransferase/poly(A) polymerase family. Bacterial CCA-adding enzyme type 3 subfamily. In terms of assembly, homodimer. Requires Mg(2+) as cofactor.

The enzyme catalyses a tRNA precursor + 2 CTP + ATP = a tRNA with a 3' CCA end + 3 diphosphate. It carries out the reaction a tRNA with a 3' CCA end + 2 CTP + ATP = a tRNA with a 3' CCACCA end + 3 diphosphate. Catalyzes the addition and repair of the essential 3'-terminal CCA sequence in tRNAs without using a nucleic acid template. Adds these three nucleotides in the order of C, C, and A to the tRNA nucleotide-73, using CTP and ATP as substrates and producing inorganic pyrophosphate. tRNA 3'-terminal CCA addition is required both for tRNA processing and repair. Also involved in tRNA surveillance by mediating tandem CCA addition to generate a CCACCA at the 3' terminus of unstable tRNAs. While stable tRNAs receive only 3'-terminal CCA, unstable tRNAs are marked with CCACCA and rapidly degraded. The sequence is that of CCA-adding enzyme from Listeria monocytogenes serovar 1/2a (strain ATCC BAA-679 / EGD-e).